Consider the following 102-residue polypeptide: Protein translation factor SUI1 homolog (102 aa).

The protein belongs to the SUI1 family.

This Methanosarcina acetivorans (strain ATCC 35395 / DSM 2834 / JCM 12185 / C2A) protein is Protein translation factor SUI1 homolog.